The following is a 521-amino-acid chain: Myocyte-specific enhancer factor 2D (521 aa).

Positions 3–57 (RKKIQIQRITDERNRQVTFTKRKFGLMKKAYELSVLCDCEIALIIFNHSNKLFQY) constitute an MADS-box domain. The segment at residues 58–86 (ASTDMDKVLLKYTEYNEPHESRTNADIIE) is a DNA-binding region (mef2-type). Phosphoserine is present on residues Ser98, Ser106, and Ser110. Ser121 is subject to Phosphoserine; by PKA. The tract at residues 174 to 207 (TDPRLLSPQQPALQRNSVSPGLPQRPASAGAMLG) is disordered. Residue Ser180 is modified to Phosphoserine; by MAPK7. Residues 180–192 (SPQQPALQRNSVS) are compositionally biased toward polar residues. Ser190 carries the phosphoserine; by PKA modification. Ser231 is modified (phosphoserine). Positions 244-266 (NKVIPAKSPPPPTHSTQLGAPSR) are disordered. N6-acetyllysine is present on Lys245. Ser251 bears the Phosphoserine mark. The beta domain stretch occupies residues 286–292 (TEDHLDL). 2 disordered regions span residues 357–407 (SLGN…QSHL) and 437–521 (SIKS…WTLK). Pro residues predominate over residues 373–400 (PQQPQPPQQQPPQPQQPQPQQPQQPQQP). Lys439 carries the post-translational modification N6-acetyllysine; alternate. A Glycyl lysine isopeptide (Lys-Gly) (interchain with G-Cter in SUMO); alternate cross-link involves residue Lys439. Ser444 carries the post-translational modification Phosphoserine.

The protein belongs to the MEF2 family. As to quaternary structure, interacts with MYOG. Forms a complex with class II HDACs in undifferentiating cells. On myogenic differentiation, HDACs are released into the cytoplasm allowing MEF2s to interact with other proteins for activation. Interacts with HDAC4 (in undifferentiating cells); the interaction translocates MEF2D to nuclear dots. Forms a heterodimer with MEF2A. Interacts with MAPK7; the interaction phosphorylates but does not activate MEF2D. Interacts with CCAR2 and HDAC3. Post-translationally, phosphorylated on Ser-444 by CDK5 is required for Lys-439 sumoylation and inhibits transcriptional activity. In neurons, enhanced CDK5 activity induced by neurotoxins promotes caspase 3-mediated cleavage leading to neuron apoptosis. Phosphorylation on Ser-180 can be enhanced by EGF. Phosphorylated and activated by CaMK4. Acetylated on Lys-439 by CREBBP. Acetylated by EP300. Deacetylated by SIRT1 and HDAC3. In terms of processing, sumoylated on Lys-439 with SUMO2 but not SUMO1; which inhibits transcriptional activity and myogenic activity. Desumoylated by SENP3. Post-translationally, proteolytically cleaved in cerebellar granule neurons on several sites by caspase 7 following neurotoxicity. Preferentially cleaves the CDK5-mediated hyperphosphorylated form which leads to neuron apoptosis and transcriptional inactivation.

The protein localises to the nucleus. Its function is as follows. Transcriptional activator which binds specifically to the MEF2 element, 5'-YTA[AT](4)TAR-3', found in numerous muscle-specific, growth factor- and stress-induced genes. Mediates cellular functions not only in skeletal and cardiac muscle development, but also in neuronal differentiation and survival. Plays diverse roles in the control of cell growth, survival and apoptosis via p38 MAPK signaling in muscle-specific and/or growth factor-related transcription. Plays a critical role in the regulation of neuronal apoptosis. The chain is Myocyte-specific enhancer factor 2D (MEF2D) from Homo sapiens (Human).